The sequence spans 214 residues: Putative glucose-6-phosphate isomerase 1 (214 aa).

Fe cation is bound by residues histidine 92, histidine 94, glutamate 101, and histidine 140.

This sequence belongs to the archaeal-type GPI family. In terms of assembly, homodimer. Fe cation is required as a cofactor.

The protein localises to the cytoplasm. The enzyme catalyses alpha-D-glucose 6-phosphate = beta-D-fructose 6-phosphate. It functions in the pathway carbohydrate degradation; glycolysis; D-glyceraldehyde 3-phosphate and glycerone phosphate from D-glucose: step 2/4. This chain is Putative glucose-6-phosphate isomerase 1 (pgiA1), found in Rhizobium meliloti (strain 1021) (Ensifer meliloti).